Consider the following 227-residue polypeptide: Uracil-DNA glycosylase 2 (227 aa).

Asp67 serves as the catalytic Proton acceptor.

It belongs to the uracil-DNA glycosylase (UDG) superfamily. UNG family.

It is found in the cytoplasm. The enzyme catalyses Hydrolyzes single-stranded DNA or mismatched double-stranded DNA and polynucleotides, releasing free uracil.. Its function is as follows. Excises uracil residues from the DNA which can arise as a result of misincorporation of dUMP residues by DNA polymerase or due to deamination of cytosine. This is Uracil-DNA glycosylase 2 (ung2) from Streptomyces coelicolor (strain ATCC BAA-471 / A3(2) / M145).